A 135-amino-acid chain; its full sequence is ATP synthase epsilon chain, chloroplastic (135 aa).

Belongs to the ATPase epsilon chain family. In terms of assembly, F-type ATPases have 2 components, CF(1) - the catalytic core - and CF(0) - the membrane proton channel. CF(1) has five subunits: alpha(3), beta(3), gamma(1), delta(1), epsilon(1). CF(0) has three main subunits: a, b and c.

It localises to the plastid. Its subcellular location is the chloroplast thylakoid membrane. Its function is as follows. Produces ATP from ADP in the presence of a proton gradient across the membrane. This chain is ATP synthase epsilon chain, chloroplastic, found in Euglena gracilis.